A 124-amino-acid chain; its full sequence is Large ribosomal subunit protein bL12 (124 aa).

It belongs to the bacterial ribosomal protein bL12 family. In terms of assembly, homodimer. Part of the ribosomal stalk of the 50S ribosomal subunit. Forms a multimeric L10(L12)X complex, where L10 forms an elongated spine to which 2 to 4 L12 dimers bind in a sequential fashion. Binds GTP-bound translation factors.

Its function is as follows. Forms part of the ribosomal stalk which helps the ribosome interact with GTP-bound translation factors. Is thus essential for accurate translation. The polypeptide is Large ribosomal subunit protein bL12 (Ralstonia nicotianae (strain ATCC BAA-1114 / GMI1000) (Ralstonia solanacearum)).